The primary structure comprises 891 residues: DNA mismatch repair protein MutS (891 aa).

617-624 (GPNMSGKS) serves as a coordination point for ATP. Basic and acidic residues predominate over residues 805 to 827 (REKIEEEEPKTKDTKRGPSEKVK). Residues 805 to 840 (REKIEEEEPKTKDTKRGPSEKVKNASPTLPRDEKGR) form a disordered region.

It belongs to the DNA mismatch repair MutS family.

Functionally, this protein is involved in the repair of mismatches in DNA. It is possible that it carries out the mismatch recognition step. This protein has a weak ATPase activity. This is DNA mismatch repair protein MutS from Porphyromonas gingivalis (strain ATCC BAA-308 / W83).